A 602-amino-acid polypeptide reads, in one-letter code: GTP-binding protein 2 (602 aa).

The interval 18-64 is disordered; that stretch reads GPAMGGNLKARGAGGSSSCGGPKGKKKNGRNRGGKANNPPYLPPEAE. Over residues 29–39 the composition is skewed to gly residues; it reads GAGGSSSCGGP. Over residues 40–50 the composition is skewed to basic residues; it reads KGKKKNGRNRG. The region spanning 170–398 is the tr-type G domain; that stretch reads FLDLRVAVLG…LNILPPLTNS (229 aa). Residues 179-186, 260-264, and 316-319 each bind GTP; these read GNVDSGKS, DLAGH, and SKVD.

It belongs to the TRAFAC class translation factor GTPase superfamily. Classic translation factor GTPase family. GTPBP1 subfamily. Predominantly expressed in thymus, spleen, and testis. Expressed at lower levels in brain, heart, lung, kidney, and skeletal muscle. In testis, specifically expressed in spermatocytes and round spermatids.

This is GTP-binding protein 2 from Mus musculus (Mouse).